The primary structure comprises 137 residues: Transcription antitermination protein NusB (137 aa).

Belongs to the NusB family.

Its function is as follows. Involved in transcription antitermination. Required for transcription of ribosomal RNA (rRNA) genes. Binds specifically to the boxA antiterminator sequence of the ribosomal RNA (rrn) operons. The chain is Transcription antitermination protein NusB from Actinobacillus pleuropneumoniae serotype 5b (strain L20).